A 368-amino-acid polypeptide reads, in one-letter code: Glutamate 5-kinase (368 aa).

ATP is bound at residue Lys-10. Substrate contacts are provided by Ser-50, Asp-137, and Asn-149. 169–170 (TD) provides a ligand contact to ATP. The PUA domain occupies 276–354 (RGTLVLDDGA…ESIVRELGYM (79 aa)).

It belongs to the glutamate 5-kinase family.

Its subcellular location is the cytoplasm. The catalysed reaction is L-glutamate + ATP = L-glutamyl 5-phosphate + ADP. Its pathway is amino-acid biosynthesis; L-proline biosynthesis; L-glutamate 5-semialdehyde from L-glutamate: step 1/2. Its function is as follows. Catalyzes the transfer of a phosphate group to glutamate to form L-glutamate 5-phosphate. This is Glutamate 5-kinase from Pseudomonas savastanoi pv. phaseolicola (strain 1448A / Race 6) (Pseudomonas syringae pv. phaseolicola (strain 1448A / Race 6)).